Reading from the N-terminus, the 460-residue chain is Telomere-binding protein homolog (460 aa).

This sequence belongs to the telombin family.

It localises to the nucleus. Its subcellular location is the chromosome. The protein resides in the telomere. Its function is as follows. May bind telomeric T4G4 sequences. The protein is Telomere-binding protein homolog of Euplotes crassus.